Here is a 633-residue protein sequence, read N- to C-terminus: Sodium- and chloride-dependent glycine transporter 1 (633 aa).

At 1 to 30 (MGLCVNGAVPSEATKKDENLKRGNWGNQIE) the chain is on the cytoplasmic side. A run of 3 helical transmembrane segments spans residues 31–51 (FVLT…FPYL), 58–78 (GAFM…LFFM), and 113–133 (YIGI…FASM). The Extracellular segment spans residues 134–208 (NRVLPWTYCN…ISEDIGDFGE (75 aa)). N-linked (GlcNAc...) asparagine glycosylation is found at Asn-158, Asn-164, Asn-173, and Asn-179. 9 consecutive transmembrane segments (helical) span residues 209–229 (VQLP…LCLI), 238–258 (VVYF…IRGI), 283–303 (VWGD…GGLI), 330–350 (SVYA…HLGV), 373–393 (LLPI…LLGL), 429–449 (IIGF…WLLL), 453–473 (YAAS…VMYI), 493–513 (LFFQ…ILIF), and 533–553 (ITIG…YAIF). Residues 554–633 (KIWCSEGDTF…GQAHTQDSKV (80 aa)) lie on the Cytoplasmic side of the membrane. Residues 588–633 (RYAQMSSTRSESNPEAQPLNPEKMKEDLSLTIQGSNGQAHTQDSKV) are disordered. 2 stretches are compositionally biased toward polar residues: residues 591–602 (QMSSTRSESNPE) and 617–633 (LTIQ…DSKV).

Belongs to the sodium:neurotransmitter symporter (SNF) (TC 2.A.22) family. SLC6A9 subfamily. As to expression, first expressed in early tailbud stage embryos in the midbrain and anterior spinal cord, and weakly in the hindbrain. By late tailbud stages, expression extends posteriorly in the spinal cord to appear in between somites. Expressed in the forebrain, retina, between the somites and in the blood islands by the swimming tadpole stages.

The protein resides in the cell membrane. The enzyme catalyses glycine(out) + chloride(out) + 2 Na(+)(out) = glycine(in) + chloride(in) + 2 Na(+)(in). Sodium- and chloride-dependent glycine transporter which is essential for regulating glycine concentrations at inhibitory glycinergic synapses. The polypeptide is Sodium- and chloride-dependent glycine transporter 1 (Xenopus laevis (African clawed frog)).